We begin with the raw amino-acid sequence, 733 residues long: DNA-binding protein SATB2 (733 aa).

The tract at residues 1 to 47 is disordered; sequence MERRSESPCLRDSPDRRSGSPDVKGPPPVKVARLEQNGSPMGARGRP. Ser-20 carries the post-translational modification Phosphoserine. Glycyl lysine isopeptide (Lys-Gly) (interchain with G-Cter in SUMO2) cross-links involve residues Lys-24 and Lys-30. Residue Ser-39 is modified to Phosphoserine. Positions 57-158 constitute a CMP domain; the sequence is GLMIPVFCVV…VVTLKIQLQS (102 aa). Lys-161 is covalently cross-linked (Glycyl lysine isopeptide (Lys-Gly) (interchain with G-Cter in SUMO2)). A CUTL domain is found at 161 to 234; sequence KLEDLPAEQW…WYKKYKKIKV (74 aa). Lys-233 participates in a covalent cross-link: Glycyl lysine isopeptide (Lys-Gly) (interchain with G-Cter in SUMO). Residue Lys-350 forms a Glycyl lysine isopeptide (Lys-Gly) (interchain with G-Cter in SUMO); alternate linkage. Residue Lys-350 forms a Glycyl lysine isopeptide (Lys-Gly) (interchain with G-Cter in SUMO2); alternate linkage. A DNA-binding region (CUT 1) is located at residues 350-437; sequence KPEPTNSSVE…ERDRIYQDER (88 aa). The segment at 435–473 is disordered; it reads DERERSMNPNVSMVSSASSSPSSSRTPQAKTSTPTTDLP. Residues 441 to 458 are compositionally biased toward low complexity; the sequence is MNPNVSMVSSASSSPSSS. Residue Ser-454 is modified to Phosphoserine. Over residues 459–470 the composition is skewed to polar residues; the sequence is RTPQAKTSTPTT. The residue at position 467 (Thr-467) is a Phosphothreonine. Positions 473–560 form a DNA-binding region, CUT 2; sequence PIKVDGANVN…ERDVIYEEES (88 aa). Lys-475 is covalently cross-linked (Glycyl lysine isopeptide (Lys-Gly) (interchain with G-Cter in SUMO2)). Disordered regions lie at residues 580–617 and 691–733; these read QVLHRQQSQPTKESSPPREEAPPPPPPTEDSCAKKPRS and DEEL…TDQR. Phosphoserine is present on Ser-594. Positions 615–674 form a DNA-binding region, homeobox; the sequence is PRSRTKISLEALGILQSFIHDVGLYPDQEAIHTLSAQLDLPKHTIIKFFQNQRYHVKHHG. The segment covering 694 to 708 has biased composition (acidic residues); that stretch reads LLTESEENDSEEGSE. Basic and acidic residues predominate over residues 709–733; it reads EMYKVEAEEENADKSKAAPAETDQR. Lys-724 is covalently cross-linked (Glycyl lysine isopeptide (Lys-Gly) (interchain with G-Cter in SUMO2)).

Belongs to the CUT homeobox family. Interacts with PIAS1. Interacts with ATF4 and RUNX2; resulting in enhanced DNA binding and transactivation by these transcription factors. Post-translationally, sumoylated by PIAS1. Sumoylation promotes nuclear localization, but represses transcription factor activity. In terms of tissue distribution, expressed in cortical neurons that extend axons across the corpus callosum. Also expressed in branchial arches and in cells of the osteoblast lineage, but not in chondrocytes and osteoclasts.

The protein localises to the nucleus matrix. Binds to DNA, at nuclear matrix- or scaffold-associated regions. Thought to recognize the sugar-phosphate structure of double-stranded DNA. Transcription factor controlling nuclear gene expression, by binding to matrix attachment regions (MARs) of DNA and inducing a local chromatin-loop remodeling. Acts as a docking site for several chromatin remodeling enzymes and also by recruiting corepressors (HDACs) or coactivators (HATs) directly to promoters and enhancers. Required for the initiation of the upper-layer neurons (UL1) specific genetic program and for the inactivation of deep-layer neurons (DL) and UL2 specific genes, probably by modulating Bcl11b expression. Repressor of Ctip2 and regulatory determinant of corticocortical connections in the developing cerebral cortex. May play an important role in palate formation. Acts as a molecular node in a transcriptional network regulating skeletal development and osteoblast differentiation. This Mus musculus (Mouse) protein is DNA-binding protein SATB2 (Satb2).